We begin with the raw amino-acid sequence, 478 residues long: Divinyl ether synthase CYP74D1 (478 aa).

Cys431 serves as a coordination point for heme.

This sequence belongs to the cytochrome P450 family. 9-divinyl ether synthase subfamily. In terms of tissue distribution, expressed in roots. Detected in stems, but not in flower buds, petioles, cotyledons or leaves.

It catalyses the reaction (9S)-hydroperoxy-(10E,12Z)-octadecadienoate = colneleate + H2O. It carries out the reaction (9S)-hydroperoxy-(10E,12Z,15Z)-octadecatrienoate = colnelenate + H2O. Functionally, involved in the biosynthesis of the anti-fungal toxins colneleate and colnelenate. Can use (9S)-hydroperoxy-(10E,12Z)-octadecadienoate (9-HPOD) and (9S)-hydroperoxy-(10E,12Z,15Z)-octadecatrienoate (9-HPOT) as substrates, but has a very low activity with the corresponding 13-hydroperoxides (13-HPOD and 13-POT). This chain is Divinyl ether synthase CYP74D1, found in Solanum lycopersicum (Tomato).